The sequence spans 419 residues: Glutamyl-tRNA reductase (419 aa).

Substrate is bound by residues 49-52 (TCNR), S107, 112-114 (EPQ), and Q118. Residue C50 is the Nucleophile of the active site. Residue 187–192 (GAGETI) coordinates NADP(+).

The protein belongs to the glutamyl-tRNA reductase family. As to quaternary structure, homodimer.

The enzyme catalyses (S)-4-amino-5-oxopentanoate + tRNA(Glu) + NADP(+) = L-glutamyl-tRNA(Glu) + NADPH + H(+). It participates in porphyrin-containing compound metabolism; protoporphyrin-IX biosynthesis; 5-aminolevulinate from L-glutamyl-tRNA(Glu): step 1/2. Functionally, catalyzes the NADPH-dependent reduction of glutamyl-tRNA(Glu) to glutamate 1-semialdehyde (GSA). The chain is Glutamyl-tRNA reductase from Psychromonas ingrahamii (strain DSM 17664 / CCUG 51855 / 37).